The following is a 107-amino-acid chain: UPF0145 protein ECA2666 (107 aa).

The protein belongs to the UPF0145 family.

The sequence is that of UPF0145 protein ECA2666 from Pectobacterium atrosepticum (strain SCRI 1043 / ATCC BAA-672) (Erwinia carotovora subsp. atroseptica).